The chain runs to 296 residues: Probable AP endonuclease (296 aa).

A disulfide bond links Cys-16 and Cys-20. Residues His-78, His-115, Glu-142, His-182, His-218, Asp-231, His-233, and Glu-271 each coordinate Zn(2+).

The protein belongs to the AP endonuclease 2 family. The cofactor is Zn(2+).

The protein localises to the host nucleus. It localises to the host cytoplasm. It is found in the virion. Endonuclease that plays a role in DNA repair. Cleaves phosphodiester bonds on the 5' side of apurinic or apyrimidinic sites (AP sites). In addition to endonuclease activity, the ASFV enzyme has a proofreading 3'-5' exonuclease activity that is considerably more efficient in the elimination of a mismatch than in that of a correctly paired base. Displays 3'-phosphatase and 3'-repair diesterase activities. The single nucleotide gaps generated by the AP endonuclease are filled by the viral AP endonuclease and DNA ligase. This chain is Probable AP endonuclease, found in Ornithodoros (relapsing fever ticks).